The following is a 211-amino-acid chain: tRNA (guanine-N(7)-)-methyltransferase (211 aa).

S-adenosyl-L-methionine is bound by residues glutamate 44, aspartate 69, aspartate 96, and aspartate 118. Aspartate 118 is an active-site residue. Lysine 122 provides a ligand contact to substrate. The tract at residues 124-129 is interaction with RNA; that stretch reads RHEKRR. Substrate is bound by residues aspartate 154 and 191-194; that span reads TEYE.

This sequence belongs to the class I-like SAM-binding methyltransferase superfamily. TrmB family.

It catalyses the reaction guanosine(46) in tRNA + S-adenosyl-L-methionine = N(7)-methylguanosine(46) in tRNA + S-adenosyl-L-homocysteine. Its pathway is tRNA modification; N(7)-methylguanine-tRNA biosynthesis. Its function is as follows. Catalyzes the formation of N(7)-methylguanine at position 46 (m7G46) in tRNA. The chain is tRNA (guanine-N(7)-)-methyltransferase from Streptococcus equi subsp. zooepidemicus (strain MGCS10565).